The chain runs to 85 residues: Putative N.vectensis toxin 1 9 (85 aa).

The first 20 residues, 1–20 (MASFKIVIVCLALLVAVASA), serve as a signal peptide directing secretion. Residues 21–36 (RRRDMMSDDELDYHFS) constitute a propeptide that is removed on maturation. Cystine bridges form between C42–C82, C44–C72, and C65–C83.

It belongs to the sea anemone sodium channel inhibitory toxin family. Type II subfamily. Expressed in ectodermal glands and in clumps outside of the extodermal layer. Is not expressed in nematocytes. In adult female tissues, shows similar expression levels in mesenteries (gametes-producing tissue), tentacles, pharynx and physa.

Its subcellular location is the secreted. Binds to site 3 of voltage-gated sodium channels and inhibits the inactivation process. Is highly active on DmNav1/TipE (drosophila) and is only extremely weakly active on rat Nav1.4-beta-1/SCN4A-SCN1B, and on human Nav1.5-beta-1/SCN5A-beta-1. This reveals high specificity for arthropod over mammalian channels. In vivo, when released into the medium, this recombinant toxin induces impaired swimming, paralysis and death of the crustacean A.nauplii within several hours. Also causes paralysis of cherry shrimps immediately after injection at very low doses. Its effect on zebrafish (D.rerio) larvae is also rapid, since it induces tail twitching accompanied by impaired swimming after 20 minutes and complete paralysis within 45 minutes. It has also been observed to cause death of zebrafish larvae within 1 hour. This Nematostella vectensis (Starlet sea anemone) protein is Putative N.vectensis toxin 1 9.